A 90-amino-acid polypeptide reads, in one-letter code: HssA/B-like protein 4 (90 aa).

This sequence belongs to the hssA/B family.

The protein is HssA/B-like protein 4 (hssl4) of Dictyostelium discoideum (Social amoeba).